A 190-amino-acid polypeptide reads, in one-letter code: GTP cyclohydrolase 1 (190 aa).

Residues Cys-75, His-78, and Cys-146 each contribute to the Zn(2+) site.

This sequence belongs to the GTP cyclohydrolase I family. Homomer.

It carries out the reaction GTP + H2O = 7,8-dihydroneopterin 3'-triphosphate + formate + H(+). It functions in the pathway cofactor biosynthesis; 7,8-dihydroneopterin triphosphate biosynthesis; 7,8-dihydroneopterin triphosphate from GTP: step 1/1. The protein is GTP cyclohydrolase 1 of Campylobacter lari (strain RM2100 / D67 / ATCC BAA-1060).